We begin with the raw amino-acid sequence, 185 residues long: NAD(P)H-quinone oxidoreductase subunit J (185 aa).

Belongs to the complex I 30 kDa subunit family. In terms of assembly, NDH-1 can be composed of about 15 different subunits; different subcomplexes with different compositions have been identified which probably have different functions.

It is found in the cellular thylakoid membrane. The catalysed reaction is a plastoquinone + NADH + (n+1) H(+)(in) = a plastoquinol + NAD(+) + n H(+)(out). It catalyses the reaction a plastoquinone + NADPH + (n+1) H(+)(in) = a plastoquinol + NADP(+) + n H(+)(out). Functionally, NDH-1 shuttles electrons from an unknown electron donor, via FMN and iron-sulfur (Fe-S) centers, to quinones in the respiratory and/or the photosynthetic chain. The immediate electron acceptor for the enzyme in this species is believed to be plastoquinone. Couples the redox reaction to proton translocation, and thus conserves the redox energy in a proton gradient. Cyanobacterial NDH-1 also plays a role in inorganic carbon-concentration. This chain is NAD(P)H-quinone oxidoreductase subunit J, found in Prochlorococcus marinus (strain MIT 9303).